The sequence spans 566 residues: Rho GTPase-activating protein gacH (566 aa).

4 disordered regions span residues Met1–Thr56, Leu65–Lys84, Ser128–Ser168, and Lys322–Asn366. Low complexity predominate over residues Ser14–Ser35. A compositionally biased stretch (polar residues) spans Pro36–Thr56. The segment covering Leu65 to Asn83 has biased composition (low complexity). Positions Asp130 to Asn141 are enriched in acidic residues. A compositionally biased stretch (low complexity) spans Asn142–Asn160. Positions Lys327–Thr337 are enriched in polar residues. The segment covering Ser345–Gln356 has biased composition (low complexity). In terms of domain architecture, Rho-GAP spans Gly369–Tyr564.

The protein localises to the cytoplasm. Functionally, rho GTPase-activating protein involved in the signal transduction pathway. In Dictyostelium discoideum (Social amoeba), this protein is Rho GTPase-activating protein gacH (gacH).